We begin with the raw amino-acid sequence, 456 residues long: Bis(5'-adenosyl)-triphosphatase enpp4 (456 aa).

The signal sequence occupies residues M1–G18. Residues Y19 to A410 are Extracellular-facing. Residues D37 and T73 each contribute to the Zn(2+) site. T73 acts as the AMP-threonine intermediate in catalysis. N94 lines the substrate pocket. The N-linked (GlcNAc...) asparagine glycan is linked to N148. Y157 contacts substrate. N169 carries an N-linked (GlcNAc...) asparagine glycan. D192, H196, D240, and H241 together coordinate Zn(2+). Position 192 (D192) interacts with substrate. C257 and C290 form a disulfide bridge. N279 and N330 each carry an N-linked (GlcNAc...) asparagine glycan. A Zn(2+)-binding site is contributed by H339. N389 carries N-linked (GlcNAc...) asparagine glycosylation. C397 and C404 are disulfide-bonded. Residues I411–M431 traverse the membrane as a helical segment. The Cytoplasmic segment spans residues R432–D456.

It belongs to the nucleotide pyrophosphatase/phosphodiesterase family. Zn(2+) serves as cofactor.

Its subcellular location is the cell membrane. The catalysed reaction is P(1),P(3)-bis(5'-adenosyl) triphosphate + H2O = AMP + ADP + 2 H(+). Functionally, hydrolyzes extracellular Ap3A into AMP and ADP, and Ap4A into AMP and ATP. Ap3A and Ap4A are diadenosine polyphosphates thought to induce proliferation of vascular smooth muscle cells. Acts as a procoagulant, mediating platelet aggregation at the site of nascent thrombus via release of ADP from Ap3A and activation of ADP receptors. The sequence is that of Bis(5'-adenosyl)-triphosphatase enpp4 (Enpp4) from Mus musculus (Mouse).